The chain runs to 147 residues: Hemoglobin subunit beta (147 aa).

The region spanning 2-147 is the Globin domain; the sequence is ELTEAQRGAI…VVSALGKQYH (146 aa). Heme b contacts are provided by histidine 63 and histidine 92.

Belongs to the globin family. In terms of assembly, heterotetramer of two alpha chains and two beta chains. As to expression, red blood cells.

Involved in oxygen transport from gills to the various peripheral tissues. This chain is Hemoglobin subunit beta (hbb), found in Electrophorus electricus (Electric eel).